A 193-amino-acid chain; its full sequence is Large ribosomal subunit protein eL19B (193 aa).

Positions 157–179 (EQQDARRARAKAARQRRAKAVEE) are disordered. The span at 164–174 (ARAKAARQRRA) shows a compositional bias: basic residues.

It belongs to the eukaryotic ribosomal protein eL19 family. Component of the large ribosomal subunit (LSU). Mature yeast ribosomes consist of a small (40S) and a large (60S) subunit. The 40S small subunit contains 1 molecule of ribosomal RNA (18S rRNA) and at least 33 different proteins. The large 60S subunit contains 3 rRNA molecules (25S, 5.8S and 5S rRNA) and at least 46 different proteins. eL19 lies in close proximity to the binding site for eukaryotic initiation factor eIF4G.

Its subcellular location is the cytoplasm. Its function is as follows. Component of the ribosome, a large ribonucleoprotein complex responsible for the synthesis of proteins in the cell. The small ribosomal subunit (SSU) binds messenger RNAs (mRNAs) and translates the encoded message by selecting cognate aminoacyl-transfer RNA (tRNA) molecules. The large subunit (LSU) contains the ribosomal catalytic site termed the peptidyl transferase center (PTC), which catalyzes the formation of peptide bonds, thereby polymerizing the amino acids delivered by tRNAs into a polypeptide chain. The nascent polypeptides leave the ribosome through a tunnel in the LSU and interact with protein factors that function in enzymatic processing, targeting, and the membrane insertion of nascent chains at the exit of the ribosomal tunnel. eL19 may play a role in the last stages of translation initiation, in particular subunit joining and shedding/releasing factors. The polypeptide is Large ribosomal subunit protein eL19B (rpl1902) (Schizosaccharomyces pombe (strain 972 / ATCC 24843) (Fission yeast)).